We begin with the raw amino-acid sequence, 1323 residues long: MDQPAGGTGKLRASAGEDDSMELSTCQELLHRLRELEAENSALAQANENQRETYERCLDEVANHVVQALLNQKDLREECIKLKKRVFDLERQNQVLSALLQQKLQLTANSLPQIPLTPLQPPSERPTSPAPNVSEGPATSLPSGLCAGQREVCWEQQLRPGGPGPPATPPPALDALSPFLRKKAQILEVLRALEETDPLLLCSPATPWRPTGQGPGSPEPINGEPCGPPQPEPSPWAPYLLLGPGSLGALLHWERVLGGPGEEEGIRQPWASSRAPPSAQGPSSGPHCAPGSSSSSSSDEAGDPNEAPSPDTLLGALARKQLNLGQLLGDTETYLQAFLAGATGPLSGDQPGPGKPNSPDPGPPQVSKSKGLPKSAWGASTPEATRLGFGATSEGQGPLPFLSMFMGAGDAPLGSRPGHPHSSSQVKSKLQIGPPSPGDAQGPLLPSPARGLKFLKLPPASEKVPSPGGPQLSPQLPRSSRIPCRNSGSDGSPSPLLARRGLGGGELSPEGAQGLPGSPLPCSAMPDSAQLRPSQSTVSTALSPGPVVSPCFENILDLSRSTFRGSPPEPPPSPLQVPTYPQLTLEVPQTPEVLRSPGAPSPGLPESCPYSGPQEKSMDRAGSESPHASRRTPGGSSKKPGQGSGRRPGDPSHTPLRDRLAALGKLKTGPEGPLGPEKNGVPARSSAEKARALVRSGECAGDVPPSARPLEQPEAKGIFRGAVALGTSSLKQQEPGLTDPGARVYSSHSMGARVDLEPISPRSCLTKVELAKSRLAGALCPQMPRTPAKVPTSAPSLGKPKSPHSSPTKLPSKSPTKVVPRPVVPLGTKEPPKPDKVKGPPWADCGSTVGQPTSPVAGPADPSQGSEGPAPHSAIEEKVMKGIEENVLRLQGQERTPGSEAKHRNTSSIASWFGLKKSKLPALNRRTEATKNKDGAGGGSPLRKEVKTEARKLEAESLNISKLMAKAEDLRRALEEEKAYLSRARPRPGGPATVPSPGLGQAQGQLAGMYQGADTFMQQLLNRVDGKELPPKSWREPKPEYGDFQPVSTDPKSPWPACGPRNGLVGPLQGCGKPGKPSSEPGRREEMPSEDSLAEPVSTTHFTACGSLTRTLDSGIGTFPPPDHSSSGTPSKNLPKTKSLRLDPPPGAPPARPPGLTKVPRRAHTLEREVPGIEELLVSGRHPSMPAFPGLLTAPPGHRSHQTCPDDPCEDPGPPPPVQLAKNWTFPNTRTAGSSSDPFLCPPRQLEGLPRTPMALPVDRKQSVDPSRTSTPQGPAFGGSRTPSTSDMGEEGRVASGGAPGLETSESLSDSLYDSLSSCGSQG.

Disordered regions lie at residues 1-22 (MDQP…DSME), 113-142 (QIPL…TSLP), 156-175 (QQLR…ALDA), 204-238 (PATP…PWAP), 260-314 (PGEE…DTLL), and 341-714 (GATG…EQPE). Residues 1-135 (MDQPAGGTGK…PTSPAPNVSE (135 aa)) are mediates interaction with CDK5RAP2 and is required for homodimerization and microtubule bundle formation. The stretch at 22–109 (ELSTCQELLH…LQQKLQLTAN (88 aa)) forms a coiled coil. Pro residues-rich tracts occupy residues 162-172 (GPGPPATPPPA) and 226-236 (CGPPQPEPSPW). The segment covering 271–298 (ASSRAPPSAQGPSSGPHCAPGSSSSSSS) has biased composition (low complexity). The span at 353-364 (PGKPNSPDPGPP) shows a compositional bias: pro residues. A phosphoserine; by CDK1 mark is found at Ser-436, Ser-447, Ser-466, and Ser-473. The short motif at 480–483 (SRIP) is the (S/T)X(I/L)P motif 1 element. Phosphoserine is present on residues Ser-489, Ser-492, and Ser-494. A compositionally biased stretch (polar residues) spans 531–542 (LRPSQSTVSTAL). Ser-573 is subject to Phosphoserine; by CDK1. A compositionally biased stretch (basic and acidic residues) spans 647–660 (RPGDPSHTPLRDRL). The residue at position 654 (Thr-654) is a Phosphothreonine. The segment at 743–1136 (RVYSSHSMGA…SGTPSKNLPK (394 aa)) is mediates interaction with beta-tubulin and is required for microtubule bundle formation. Phosphoserine; by CDK1 is present on Ser-760. Disordered regions lie at residues 778-875 (ALCP…HSAI), 892-948 (GQER…EVKT), 979-1003 (AYLS…GQAQ), and 1027-1323 (KELP…GSQG). A compositionally biased stretch (low complexity) spans 799–817 (KPKSPHSSPTKLPSKSPTK). A (S/T)X(I/L)P motif 2 motif is present at residues 808-811 (TKLP). A (S/T)X(I/L)P motif 3; required for interaction with MAPRE1 motif is present at residues 918 to 921 (SKLP). Residues 925 to 934 (RRTEATKNKD) are compositionally biased toward basic and acidic residues. The stretch at 942–985 (LRKEVKTEARKLEAESLNISKLMAKAEDLRRALEEEKAYLSRAR) forms a coiled coil. The span at 1027–1041 (KELPPKSWREPKPEY) shows a compositional bias: basic and acidic residues. Composition is skewed to polar residues over residues 1097-1112 (VSTT…TRTL) and 1124-1136 (HSSS…NLPK). Over residues 1143 to 1153 (DPPPGAPPARP) the composition is skewed to pro residues. Ser-1184 bears the Phosphoserine mark. Composition is skewed to polar residues over residues 1225–1237 (TFPN…SSSD) and 1264–1273 (VDPSRTSTPQ). Over residues 1302–1323 (LETSESLSDSLYDSLSSCGSQG) the composition is skewed to low complexity.

As to quaternary structure, homodimer. Interacts with CDK5RAP2. Interacts with MAPRE1. Interacts with beta-tubulin. In terms of processing, CDK1/Cyclin B-dependent phosphorylation mediates its dissociation from centrosomes during mitosis.

It localises to the cytoplasm. Its subcellular location is the cytoskeleton. It is found in the microtubule organizing center. The protein localises to the centrosome. Functionally, regulates microtubule organization and stabilization. Promotes microtubule growth and bundling formation and stabilizes microtubules by increasing intense acetylation of microtubules. Both tubulin-binding and homodimer formation are required for NCKAP5L-mediated microtubule bundle formation. The polypeptide is Nck-associated protein 5-like (Nckap5l) (Mus musculus (Mouse)).